We begin with the raw amino-acid sequence, 406 residues long: Serine/threonine transporter SstT (406 aa).

The next 9 membrane-spanning stretches (helical) occupy residues 11-31 (IGLV…GWLM), 45-65 (FVGA…MAAI), 79-99 (VLIM…VASF), 141-161 (AIAN…GLAL), 185-205 (FVIA…IAET), 216-236 (LLTI…PIIV), 298-318 (MAGA…TLGV), 330-350 (VVAT…LLLI), and 357-377 (FNIP…IGVV).

It belongs to the dicarboxylate/amino acid:cation symporter (DAACS) (TC 2.A.23) family.

It localises to the cell inner membrane. The enzyme catalyses L-serine(in) + Na(+)(in) = L-serine(out) + Na(+)(out). It catalyses the reaction L-threonine(in) + Na(+)(in) = L-threonine(out) + Na(+)(out). Functionally, involved in the import of serine and threonine into the cell, with the concomitant import of sodium (symport system). This is Serine/threonine transporter SstT from Psychrobacter sp. (strain PRwf-1).